We begin with the raw amino-acid sequence, 400 residues long: Elongation factor Tu (400 aa).

One can recognise a tr-type G domain in the interval 10–208; the sequence is KPHLNVGTIG…TMDEYFPEPQ (199 aa). A G1 region spans residues 19–26; sequence GHIDHGKT. Residue 19-26 participates in GTP binding; that stretch reads GHIDHGKT. Position 26 (Thr26) interacts with Mg(2+). The G2 stretch occupies residues 60-64; it reads GITIN. A G3 region spans residues 81 to 84; it reads DCPG. GTP is bound by residues 81-85 and 136-139; these read DCPGH and NKTD. Residues 136 to 139 form a G4 region; the sequence is NKTD. Residues 174-176 are G5; sequence SAL.

The protein belongs to the TRAFAC class translation factor GTPase superfamily. Classic translation factor GTPase family. EF-Tu/EF-1A subfamily. Monomer.

The protein resides in the cytoplasm. The enzyme catalyses GTP + H2O = GDP + phosphate + H(+). GTP hydrolase that promotes the GTP-dependent binding of aminoacyl-tRNA to the A-site of ribosomes during protein biosynthesis. The protein is Elongation factor Tu of Thermosipho melanesiensis (strain DSM 12029 / CIP 104789 / BI429).